The chain runs to 882 residues: Alanine--tRNA ligase (882 aa).

4 residues coordinate Zn(2+): histidine 568, histidine 572, cysteine 670, and histidine 674.

Belongs to the class-II aminoacyl-tRNA synthetase family. Zn(2+) is required as a cofactor.

It localises to the cytoplasm. It catalyses the reaction tRNA(Ala) + L-alanine + ATP = L-alanyl-tRNA(Ala) + AMP + diphosphate. Functionally, catalyzes the attachment of alanine to tRNA(Ala) in a two-step reaction: alanine is first activated by ATP to form Ala-AMP and then transferred to the acceptor end of tRNA(Ala). Also edits incorrectly charged Ser-tRNA(Ala) and Gly-tRNA(Ala) via its editing domain. The sequence is that of Alanine--tRNA ligase from Lactobacillus gasseri (strain ATCC 33323 / DSM 20243 / BCRC 14619 / CIP 102991 / JCM 1131 / KCTC 3163 / NCIMB 11718 / NCTC 13722 / AM63).